A 360-amino-acid polypeptide reads, in one-letter code: Alkanal monooxygenase alpha chain (360 aa).

This sequence belongs to the bacterial luciferase oxidoreductase family. Heterodimer of an alpha and a beta chain.

It catalyses the reaction a long-chain fatty aldehyde + FMNH2 + O2 = a long-chain fatty acid + hnu + FMN + H2O + 2 H(+). In terms of biological role, light-emitting reaction in luminous bacteria. This is Alkanal monooxygenase alpha chain (luxA) from Photorhabdus luminescens (Xenorhabdus luminescens).